An 88-amino-acid chain; its full sequence is Putative regulatory protein PCC7424_3427 (88 aa).

Belongs to the RemA family.

The protein is Putative regulatory protein PCC7424_3427 of Gloeothece citriformis (strain PCC 7424) (Cyanothece sp. (strain PCC 7424)).